Reading from the N-terminus, the 118-residue chain is uncharacterized protein (118 aa).

Transmembrane regions (helical) follow at residues Val-20–Ile-39, Leu-46–Val-63, and Leu-67–Gly-85. The disordered stretch occupies residues Gly-85–Glu-118. Basic residues predominate over residues Ser-88–Ser-97. The segment covering Asp-103–Glu-118 has biased composition (acidic residues).

The protein localises to the cell membrane. This is an uncharacterized protein from Archaeoglobus fulgidus (strain ATCC 49558 / DSM 4304 / JCM 9628 / NBRC 100126 / VC-16).